The sequence spans 118 residues: Small ribosomal subunit protein uS13 (118 aa).

Positions 91–118 (HRRGLPVRGQRTRTNARTRKGPRRPIKK) are disordered.

Belongs to the universal ribosomal protein uS13 family. As to quaternary structure, part of the 30S ribosomal subunit. Forms a loose heterodimer with protein S19. Forms two bridges to the 50S subunit in the 70S ribosome.

Located at the top of the head of the 30S subunit, it contacts several helices of the 16S rRNA. In the 70S ribosome it contacts the 23S rRNA (bridge B1a) and protein L5 of the 50S subunit (bridge B1b), connecting the 2 subunits; these bridges are implicated in subunit movement. Contacts the tRNAs in the A and P-sites. This chain is Small ribosomal subunit protein uS13, found in Methylococcus capsulatus (strain ATCC 33009 / NCIMB 11132 / Bath).